A 743-amino-acid polypeptide reads, in one-letter code: Threonine synthase-like 1 (743 aa).

The residue at position 281 (Lys281) is an N6-acetyllysine. Position 351 is an N6-(pyridoxal phosphate)lysine (Lys351).

The protein belongs to the threonine synthase family. Pyridoxal 5'-phosphate is required as a cofactor.

This Macaca fascicularis (Crab-eating macaque) protein is Threonine synthase-like 1 (THNSL1).